The primary structure comprises 1968 residues: Signal element on autosome protein 2 (1968 aa).

Residues 72–88 (TSSSFSSSLATTTTTSS) show a composition bias toward low complexity. Disordered stretches follow at residues 72–252 (TSSS…TPTQ) and 271–364 (QVQQ…VQEQ). The span at 107–119 (SHHHPSSSHHHHP) shows a compositional bias: basic residues. Low complexity-rich tracts occupy residues 120 to 134 (GQQQ…SHLQ), 144 to 165 (HPYY…YGQA), 219 to 232 (DQPS…LPPL), and 298 to 338 (LSSI…SSSS). Positions 346–362 (PNASSSSLIKRQSQDVQ) are enriched in polar residues. Residues 413–440 (YQCPNCNRNLANARNLQRHRQTCGSAQH) form a C2H2-type 1 zinc finger. Disordered regions lie at residues 451-499 (RSPP…LYSP) and 538-601 (WSRD…TLDP). A compositionally biased stretch (pro residues) spans 452 to 467 (SPPPCASAPPVAPPTA). A compositionally biased stretch (polar residues) spans 472-482 (FQHHNSTGNLT). Residues 483 to 498 (LSYSSSSSRHQSSLYS) show a composition bias toward low complexity. Over residues 570–594 (PLHHLDSFDSADHRKETPRECHEPD) the composition is skewed to basic and acidic residues. The segment at 651 to 672 (FTCEACKKSVSSERSLRRHYNT) adopts a C2H2-type 2; degenerate zinc-finger fold. 2 disordered regions span residues 681–712 (AASG…GPEK) and 785–854 (VTSA…TGNP). The segment covering 690–702 (TTKRKPATKRPSK) has biased composition (basic residues). Positions 794-804 (HQLPHQQPQQQ) are enriched in low complexity. The segment covering 812-824 (LLNEQDESADDDG) has biased composition (acidic residues). A compositionally biased stretch (low complexity) spans 827-851 (RSSSGTVSNSTTTTTTATTTSSKST). The C2H2-type 3; degenerate zinc finger occupies 856–875 (FTCEHCARQLCSMSNLKRHR). Disordered stretches follow at residues 882-905 (ASSS…TAPA), 975-1069 (GDAL…EHKN), 1083-1227 (RMDA…SPLD), and 1246-1273 (PGPL…SQQA). Composition is skewed to low complexity over residues 981-1015 (QQHQ…AGRI), 1023-1046 (ILNQ…MLNP), and 1108-1131 (PQRS…YQVQ). Pro residues predominate over residues 1136–1146 (PLPPMQLPPLQ). Over residues 1147–1185 (NPHNQQQQHQMLHQSQMNYQQVQQVQQVQHVQQQQNLQN) the composition is skewed to low complexity. Polar residues-rich tracts occupy residues 1201–1211 (APGNRSRSHSN) and 1251–1273 (QGQS…SQQA). A C2H2-type 4 zinc finger spans residues 1274–1297 (YICPECKKTYASRKNVKRHRMAVH). 4 disordered regions span residues 1333-1478 (TPDS…ADEE), 1569-1608 (SVGL…QQQQ), 1624-1671 (HPPM…LTCS), and 1769-1822 (ADRQ…PSTN). The segment covering 1388–1403 (ERQEPPKKPVADDHKS) has biased composition (basic and acidic residues). 2 stretches are compositionally biased toward pro residues: residues 1407-1421 (PLPP…PPPY) and 1429-1445 (LNPP…PPLQ). Over residues 1589-1608 (QHPQQHPQQHPQQHPQQQQQ) the composition is skewed to low complexity. Polar residues predominate over residues 1624-1633 (HPPMPVSQQF). The C2H2-type 5; degenerate zinc-finger motif lies at 1668–1694 (LTCSGCKKILGSDYSLRRHRAGCADVQ). Residues 1800 to 1811 (SSSSSSSTSSAS) show a composition bias toward low complexity. The C2H2-type 6 zinc-finger motif lies at 1826 to 1858 (HYCQFPECGKNFSSEWNLARHTRESCKMTTRAH).

In terms of tissue distribution, expressed in seam cells, intestine cells, pharyngeal muscles and nerve ring neurons.

The protein resides in the nucleus. It is found in the cytoplasm. Its function is as follows. RNA-binding protein, which regulates the expression of proteins required to control developmental timing of events during the L2 to L3 larval stage switch. Binds to the 3'UTR of the transcript of the heterochronic protein lin-28 to post-transcriptionally negatively regulate its expression in certain tissue types in the later larval stages. During larval development, controls the timing of seam cell division and terminal differentiation into adult alae. In vitro, it can also bind to DNA through its first zinc finger. May bind directly or indirectly to the promoter of the sex-determining factor xol-1 to activate its transcription. Its activation of xol-1 transcription controls sex determination and X chromosome dosage compensation to promote male development. Through the negative regulation of lin-28 transcript, it also has a role in the fox-1-sex-1-mediated determination of sexual fate. Acts in the intestine to play a role in regulating adult lifespan. The chain is Signal element on autosome protein 2 from Caenorhabditis elegans.